We begin with the raw amino-acid sequence, 102 residues long: Large ribosomal subunit protein bL28 (102 aa).

Belongs to the bacterial ribosomal protein bL28 family.

This is Large ribosomal subunit protein bL28 from Bradyrhizobium diazoefficiens (strain JCM 10833 / BCRC 13528 / IAM 13628 / NBRC 14792 / USDA 110).